The sequence spans 147 residues: MKVLLIKDVKALGKAGEIKEVKDGYGQNFLIAKGFAKAATNEVLRKYESDKKKEAENLRFEIANLEKLKEELSKITLEISKPVGANGSLFGGVTKDEIAHALKEQSHIEIDKKSLECDTLKSLGIHEVSVKLGHAIHAKFNISIKAE.

This sequence belongs to the bacterial ribosomal protein bL9 family.

Binds to the 23S rRNA. The polypeptide is Large ribosomal subunit protein bL9 (Campylobacter jejuni subsp. doylei (strain ATCC BAA-1458 / RM4099 / 269.97)).